Here is a 471-residue protein sequence, read N- to C-terminus: Ubiquitin-conjugating enzyme E2 variant 3 (471 aa).

One can recognise a UEV domain in the interval 2–145 (EFDCEGLRRL…QEELPMYSLS (144 aa)). Position 191 to 219 (191 to 219 (GELGIACTLAISAKGIADRLVLLDLSEGT)) interacts with NAD(+).

The protein in the N-terminal section; belongs to the ubiquitin-conjugating enzyme family. UEV subfamily. It in the C-terminal section; belongs to the LDH/MDH superfamily. As to quaternary structure, homodimer. In terms of tissue distribution, colon, colon carcinoma cell lines, normal cervical epithelium, carcinomas of the uterine cervix and peripheral blood leukocytes.

Functionally, possible negative regulator of polyubiquitination. This chain is Ubiquitin-conjugating enzyme E2 variant 3, found in Homo sapiens (Human).